Reading from the N-terminus, the 507-residue chain is Cobyric acid synthase (507 aa).

Positions 251 to 448 constitute a GATase cobBQ-type domain; that stretch reads DIDIAVVHLP…LHGLFDSDAF (198 aa). The active-site Nucleophile is Cys332. His440 is an active-site residue.

Belongs to the CobB/CobQ family. CobQ subfamily.

It participates in cofactor biosynthesis; adenosylcobalamin biosynthesis. Functionally, catalyzes amidations at positions B, D, E, and G on adenosylcobyrinic A,C-diamide. NH(2) groups are provided by glutamine, and one molecule of ATP is hydrogenolyzed for each amidation. This Klebsiella pneumoniae (strain 342) protein is Cobyric acid synthase.